We begin with the raw amino-acid sequence, 251 residues long: Triosephosphate isomerase (251 aa).

A substrate-binding site is contributed by 10–12 (NWK). The Electrophile role is filled by histidine 99. The active-site Proton acceptor is glutamate 167. Substrate is bound by residues glycine 173, serine 211, and 232 to 233 (GG).

The protein belongs to the triosephosphate isomerase family. As to quaternary structure, homodimer.

Its subcellular location is the cytoplasm. It carries out the reaction D-glyceraldehyde 3-phosphate = dihydroxyacetone phosphate. The protein operates within carbohydrate biosynthesis; gluconeogenesis. It functions in the pathway carbohydrate degradation; glycolysis; D-glyceraldehyde 3-phosphate from glycerone phosphate: step 1/1. Involved in the gluconeogenesis. Catalyzes stereospecifically the conversion of dihydroxyacetone phosphate (DHAP) to D-glyceraldehyde-3-phosphate (G3P). The protein is Triosephosphate isomerase of Neisseria meningitidis serogroup A / serotype 4A (strain DSM 15465 / Z2491).